The following is a 318-amino-acid chain: ATP synthase gamma chain (318 aa).

Belongs to the ATPase gamma chain family. F-type ATPases have 2 components, CF(1) - the catalytic core - and CF(0) - the membrane proton channel. CF(1) has five subunits: alpha(3), beta(3), gamma(1), delta(1), epsilon(1). CF(0) has three main subunits: a, b and c.

It localises to the cell membrane. Functionally, produces ATP from ADP in the presence of a proton gradient across the membrane. The gamma chain is believed to be important in regulating ATPase activity and the flow of protons through the CF(0) complex. This is ATP synthase gamma chain from Lactobacillus gasseri (strain ATCC 33323 / DSM 20243 / BCRC 14619 / CIP 102991 / JCM 1131 / KCTC 3163 / NCIMB 11718 / NCTC 13722 / AM63).